The following is a 360-amino-acid chain: Inhibin alpha chain (360 aa).

An N-terminal signal peptide occupies residues 1–17; it reads MWLQLLLLLLAPQGGHG. The propeptide occupies 18–60; sequence CHGLELDRELVLAKVRALFLDALGPPPVTGEGGDPGVRRLHRR. The propeptide at 61–226 is inhibin alpha N-terminal region; that stretch reads HAVGGFMRRG…PPSGGERARR (166 aa). Residues Asn140 and Asn262 are each glycosylated (N-linked (GlcNAc...) asparagine). 3 cysteine pairs are disulfide-bonded: Cys256–Cys322, Cys285–Cys357, and Cys289–Cys359.

Belongs to the TGF-beta family. Dimeric, linked by one or more disulfide bonds. Activin B is a dimer of alpha and beta-B. Inhibin A is a dimer of alpha and beta-A. Inhibin B is a dimer of alpha and beta-B. Interacts with TGFBR3L; this interaction regulates female fertility. Proteolytic processing yields a number of bioactive forms, consisting either solely of the mature alpha chain, of the most N-terminal propeptide linked through a disulfide bond to the mature alpha chain, or of the entire proprotein.

It localises to the secreted. In terms of biological role, inhibins and activins inhibit and activate, respectively, the secretion of follitropin by the pituitary gland. Inhibins/activins are involved in regulating a number of diverse functions such as hypothalamic and pituitary hormone secretion, gonadal hormone secretion, germ cell development and maturation, erythroid differentiation, insulin secretion, nerve cell survival, embryonic axial development or bone growth, depending on their subunit composition. Inhibins appear to oppose the functions of activins. Inhibin A is a dimer of alpha/INHA and beta-A/INHBA that functions as a feedback regulator in the hypothalamic-pituitary-gonadal (HPG) axis. Inhibits the secretion of FSH from the anterior pituitary gland by acting on pituitary gonadotrope cells. Antagonizes activin A by binding to the proteoglycan, betaglycan, and forming a stable complex with and, thereby, sequestering type II activin receptors while excluding type I receptor. Its function is as follows. Inhibin B is a dimer of alpha and beta-B that plays a crucial role in the regulation of the reproductive system by inhibiting the secretion of follicle-stimulating hormone (FSH) from the anterior pituitary gland. Thereby, maintains reproductive homeostasis in both males and females. Acts as a more potent suppressor of FSH release than inhibin A. Functions as competitive receptor antagonist binding activin type II receptors with high affinity in the presence of the TGF-beta type III coreceptor/TGFBR3L. In Bos taurus (Bovine), this protein is Inhibin alpha chain (INHA).